Consider the following 429-residue polypeptide: Enolase (429 aa).

A (2R)-2-phosphoglycerate-binding site is contributed by Gln-163. Glu-205 acts as the Proton donor in catalysis. Mg(2+)-binding residues include Asp-242, Glu-287, and Asp-314. (2R)-2-phosphoglycerate contacts are provided by Lys-339, Arg-368, Ser-369, and Lys-390. Residue Lys-339 is the Proton acceptor of the active site.

Belongs to the enolase family. It depends on Mg(2+) as a cofactor.

The protein localises to the cytoplasm. Its subcellular location is the secreted. It is found in the cell surface. The catalysed reaction is (2R)-2-phosphoglycerate = phosphoenolpyruvate + H2O. Its pathway is carbohydrate degradation; glycolysis; pyruvate from D-glyceraldehyde 3-phosphate: step 4/5. Functionally, catalyzes the reversible conversion of 2-phosphoglycerate (2-PG) into phosphoenolpyruvate (PEP). It is essential for the degradation of carbohydrates via glycolysis. In Anaeromyxobacter dehalogenans (strain 2CP-1 / ATCC BAA-258), this protein is Enolase.